A 323-amino-acid polypeptide reads, in one-letter code: Methionyl-tRNA formyltransferase (323 aa).

Residue 113–116 (SLLP) participates in (6S)-5,6,7,8-tetrahydrofolate binding.

The protein belongs to the Fmt family.

It catalyses the reaction L-methionyl-tRNA(fMet) + (6R)-10-formyltetrahydrofolate = N-formyl-L-methionyl-tRNA(fMet) + (6S)-5,6,7,8-tetrahydrofolate + H(+). Its function is as follows. Attaches a formyl group to the free amino group of methionyl-tRNA(fMet). The formyl group appears to play a dual role in the initiator identity of N-formylmethionyl-tRNA by promoting its recognition by IF2 and preventing the misappropriation of this tRNA by the elongation apparatus. The chain is Methionyl-tRNA formyltransferase from Nitrosococcus oceani (strain ATCC 19707 / BCRC 17464 / JCM 30415 / NCIMB 11848 / C-107).